Reading from the N-terminus, the 439-residue chain is ATP-dependent RNA helicase RhlB (439 aa).

The Q motif motif lies at 9 to 37 (QKFADLPLHPEVKQALAENGFEFCTPIQA). Positions 40–219 (LPVLLQSKDI…YDHMNDPVKV (180 aa)) constitute a Helicase ATP-binding domain. 53-60 (AQTGTGKT) contacts ATP. A DEAD box motif is present at residues 165 to 168 (DEAD). Positions 243 to 390 (KMRLLLTLIE…VSNYDRDALL (148 aa)) constitute a Helicase C-terminal domain. The interval 395-439 (SPVKIHRKHPAGARNLRERSGAGRTPGAHRSGGRPPRHDRTRRQP) is disordered. Positions 425-439 (SGGRPPRHDRTRRQP) are enriched in basic residues.

Belongs to the DEAD box helicase family. RhlB subfamily. As to quaternary structure, component of the RNA degradosome, which is a multiprotein complex involved in RNA processing and mRNA degradation.

The protein localises to the cytoplasm. It carries out the reaction ATP + H2O = ADP + phosphate + H(+). In terms of biological role, DEAD-box RNA helicase involved in RNA degradation. Has RNA-dependent ATPase activity and unwinds double-stranded RNA. This Shewanella oneidensis (strain ATCC 700550 / JCM 31522 / CIP 106686 / LMG 19005 / NCIMB 14063 / MR-1) protein is ATP-dependent RNA helicase RhlB.